The primary structure comprises 123 residues: Alpha-lactalbumin B/C (123 aa).

The C-type lysozyme domain occupies 1-123 (KQFTKCQLSQ…KLEQWLCEEL (123 aa)). Intrachain disulfides connect Cys-6-Cys-120, Cys-28-Cys-111, Cys-61-Cys-77, and Cys-73-Cys-91. Residues Lys-79, Asp-82, Asp-84, Asp-87, and Asp-88 each contribute to the Ca(2+) site.

It belongs to the glycosyl hydrolase 22 family. Lactose synthase (LS) is a heterodimer of a catalytic component, beta1,4-galactosyltransferase (beta4Gal-T1) and a regulatory component, alpha-lactalbumin (LA). As to expression, mammary gland specific. Secreted in milk.

The protein resides in the secreted. Regulatory subunit of lactose synthase, changes the substrate specificity of galactosyltransferase in the mammary gland making glucose a good acceptor substrate for this enzyme. This enables LS to synthesize lactose, the major carbohydrate component of milk. In other tissues, galactosyltransferase transfers galactose onto the N-acetylglucosamine of the oligosaccharide chains in glycoproteins. This Equus caballus (Horse) protein is Alpha-lactalbumin B/C.